The chain runs to 209 residues: Uracil phosphoribosyltransferase (209 aa).

Residues Arg79, Arg104, and 131–139 (DPMLATGGS) contribute to the 5-phospho-alpha-D-ribose 1-diphosphate site. Uracil-binding positions include Ile194 and 199-201 (GDA). Asp200 serves as a coordination point for 5-phospho-alpha-D-ribose 1-diphosphate.

The protein belongs to the UPRTase family. The cofactor is Mg(2+).

The enzyme catalyses UMP + diphosphate = 5-phospho-alpha-D-ribose 1-diphosphate + uracil. It participates in pyrimidine metabolism; UMP biosynthesis via salvage pathway; UMP from uracil: step 1/1. Allosterically activated by GTP. Functionally, catalyzes the conversion of uracil and 5-phospho-alpha-D-ribose 1-diphosphate (PRPP) to UMP and diphosphate. In Geobacter sp. (strain M21), this protein is Uracil phosphoribosyltransferase.